A 112-amino-acid chain; its full sequence is Protein preY, mitochondrial (112 aa).

The N-terminal 34 residues, 1–34 (MLSATCRRLAPALRRLRALSAVAGRFLQVPGARL), are a transit peptide targeting the mitochondrion. One can recognise a TRM112 domain in the interval 49 to 95 (HPALLQFLVCPLSKKPLRYEASTNELVNEELGIAYPIIDGIPNMIPQ).

This sequence belongs to the PREY family. In terms of assembly, interacts (via TRM112 domain) with NDUFAF5; the interaction is direct and stabilizes NDUFAF5 protein. Interacts with COQ5; the interaction is direct, stabilizes COQ5 protein and associates PYURF with COQ enzyme complex.

The protein localises to the mitochondrion. In mitochondria, S-adenosylmethionine-dependent methyltransferase chaperone that supports both coenzyme Q biosynthesis, by stabilizing its components, such as COQ5, and NADH:ubiquinone oxidoreductase complex (complex I, MT-ND1) assembly, by stabilizing complex I assembly factors, such as NDUFAF5. This chain is Protein preY, mitochondrial (Pyurf), found in Mus musculus (Mouse).